Reading from the N-terminus, the 321-residue chain is Coproporphyrin III ferrochelatase (321 aa).

Positions 185 and 267 each coordinate Fe(2+).

This sequence belongs to the ferrochelatase family.

The protein localises to the cytoplasm. The catalysed reaction is Fe-coproporphyrin III + 2 H(+) = coproporphyrin III + Fe(2+). It functions in the pathway porphyrin-containing compound metabolism; protoheme biosynthesis. Involved in coproporphyrin-dependent heme b biosynthesis. Catalyzes the insertion of ferrous iron into coproporphyrin III to form Fe-coproporphyrin III. This Lacticaseibacillus casei (strain BL23) (Lactobacillus casei) protein is Coproporphyrin III ferrochelatase.